The sequence spans 446 residues: tRNA modification GTPase MnmE (446 aa).

Residues Arg-24, Glu-81, and Lys-120 each coordinate (6S)-5-formyl-5,6,7,8-tetrahydrofolate. The region spanning 216-368 (GLHAVLIGPP…LHTRLRELAL (153 aa)) is the TrmE-type G domain. Asn-226 is a binding site for K(+). GTP contacts are provided by residues 226–231 (NAGKSS), 245–251 (TDVAGTT), and 270–273 (DTAG). Ser-230 is a binding site for Mg(2+). Thr-245, Val-247, and Thr-250 together coordinate K(+). Position 251 (Thr-251) interacts with Mg(2+). A (6S)-5-formyl-5,6,7,8-tetrahydrofolate-binding site is contributed by Lys-446.

It belongs to the TRAFAC class TrmE-Era-EngA-EngB-Septin-like GTPase superfamily. TrmE GTPase family. Homodimer. Heterotetramer of two MnmE and two MnmG subunits. K(+) is required as a cofactor.

Its subcellular location is the cytoplasm. Functionally, exhibits a very high intrinsic GTPase hydrolysis rate. Involved in the addition of a carboxymethylaminomethyl (cmnm) group at the wobble position (U34) of certain tRNAs, forming tRNA-cmnm(5)s(2)U34. The chain is tRNA modification GTPase MnmE from Xanthomonas campestris pv. campestris (strain 8004).